The sequence spans 419 residues: MDVDNGEGQVQVHLKTKQEHYAVPDVPYAIDGTVTTAELNTFVNALLLSKGSSAVDFDFLVFDEYLRGRLCDHLREKAISFEDAIEIEYVERFPAPEPQDCLLHDDWVSAVKASGKWILTGCYDNTLNIWTNKGKHILTIPGHTAPIKAVDWISLDDDTGRFVSSSQDQTAMLWQWNVGANTVECVSVCKGHERGVDSVSVSPDGQRFATGSWDTMLKVWSAELEDAGEGTSKRMKESGVRTPKITLQGHRESISAVQWMDASTLLTGSWDHTLKVWDLSLEGIKAEISTNKSIFDASYSKLNHLILTASADKNLRLYDSRTNQGSVVRNTYLGHNAWVQTVMWSTTEEFLFVSGSYDNQNKLWDCRSPKAPLYDLLGHGEKVLDIDWTNPKYIVSGGSDNTVRVFKSRKALVENMDTK.

The ubiquitin-like (UBL) domain stretch occupies residues 10-91 (VQVHLKTKQE…EDAIEIEYVE (82 aa)). 7 WD repeats span residues 103–141 (LHDD…LTIP), 142–184 (GHTA…NTVE), 191–230 (GHER…AGEG), 249–287 (GHRE…IKAE), 289–328 (STNK…GSVV), 334–374 (GHNA…APLY), and 378–416 (GHGE…VENM).

This sequence belongs to the WD repeat WDR12/YTM1 family.

Its subcellular location is the nucleus. It localises to the nucleolus. The protein localises to the nucleoplasm. Functionally, required for maturation of ribosomal RNAs and formation of the large ribosomal subunit. In Drosophila persimilis (Fruit fly), this protein is Ribosome biogenesis protein WDR12 homolog.